We begin with the raw amino-acid sequence, 657 residues long: Pyoverdine export ATP-binding/permease protein PvdT (657 aa).

Residues 6–245 (IDLRNIRKSY…LSANAGALQA (240 aa)) form the ABC transporter domain. An ATP-binding site is contributed by 43 to 50 (GASGSGKS). 4 helical membrane passes run 285-305 (ALTLLGIIIGVASVVVMLAVG), 532-552 (LSLMLGAIAAISLLVGGIGVM), 590-610 (LSVVGGLAGIGVALIIGGILI), and 620-640 (LAAVLGAFACALVTGVIFGFM).

The protein belongs to the ABC transporter superfamily. Macrolide exporter (TC 3.A.1.122) family. In terms of assembly, part of the tripartite efflux system PvdRT-OpmQ, which is composed of an inner membrane component with both ATPase and permease domains, PvdT, a periplasmic membrane fusion protein, PvdR, and an outer membrane component, OpmQ.

Its subcellular location is the cell inner membrane. Functionally, part of the tripartite efflux system PvdRT-OpmQ required for the secretion into the extracellular milieu of the siderophore pyoverdine (PVD), which is involved in iron acquisition. This subunit binds PVD and drives its secretion by hydrolyzing ATP. The system is responsible for export of newly synthesized PVD after the final steps of biosynthesis have taken place in the periplasm. It is also responsible for recycling of PVD after internalization of ferri-PVD into the periplasm by the outer-membrane receptor FpvA and release of iron from PVD, thus making PVD available for new cycles of iron uptake. The sequence is that of Pyoverdine export ATP-binding/permease protein PvdT from Pseudomonas fluorescens (strain ATCC BAA-477 / NRRL B-23932 / Pf-5).